A 501-amino-acid polypeptide reads, in one-letter code: Lysine--tRNA ligase (501 aa).

Positions 411 and 418 each coordinate Mg(2+).

This sequence belongs to the class-II aminoacyl-tRNA synthetase family. As to quaternary structure, homodimer. Mg(2+) serves as cofactor.

It localises to the cytoplasm. The enzyme catalyses tRNA(Lys) + L-lysine + ATP = L-lysyl-tRNA(Lys) + AMP + diphosphate. In Shewanella woodyi (strain ATCC 51908 / MS32), this protein is Lysine--tRNA ligase.